A 405-amino-acid chain; its full sequence is Glucose-1-phosphate adenylyltransferase (405 aa).

Alpha-D-glucose 1-phosphate-binding positions include Y96, G161, E176–K177, and S194.

The protein belongs to the bacterial/plant glucose-1-phosphate adenylyltransferase family. In terms of assembly, homotetramer.

It catalyses the reaction alpha-D-glucose 1-phosphate + ATP + H(+) = ADP-alpha-D-glucose + diphosphate. Its pathway is glycan biosynthesis; glycogen biosynthesis. In terms of biological role, involved in the biosynthesis of ADP-glucose, a building block required for the elongation reactions to produce glycogen. Catalyzes the reaction between ATP and alpha-D-glucose 1-phosphate (G1P) to produce pyrophosphate and ADP-Glc. This chain is Glucose-1-phosphate adenylyltransferase, found in Aliivibrio fischeri (strain ATCC 700601 / ES114) (Vibrio fischeri).